A 97-amino-acid polypeptide reads, in one-letter code: Co-chaperonin GroES (97 aa).

It belongs to the GroES chaperonin family. As to quaternary structure, heptamer of 7 subunits arranged in a ring. Interacts with the chaperonin GroEL.

The protein resides in the cytoplasm. Its function is as follows. Together with the chaperonin GroEL, plays an essential role in assisting protein folding. The GroEL-GroES system forms a nano-cage that allows encapsulation of the non-native substrate proteins and provides a physical environment optimized to promote and accelerate protein folding. GroES binds to the apical surface of the GroEL ring, thereby capping the opening of the GroEL channel. This is Co-chaperonin GroES from Blochmanniella pennsylvanica (strain BPEN).